We begin with the raw amino-acid sequence, 214 residues long: Guanylate kinase (214 aa).

A Guanylate kinase-like domain is found at 6 to 192 (GTLYIISAPS…ALEDLKSIFR (187 aa)). ATP is bound at residue 13–20 (APSGAGKT).

This sequence belongs to the guanylate kinase family.

It is found in the cytoplasm. The enzyme catalyses GMP + ATP = GDP + ADP. Essential for recycling GMP and indirectly, cGMP. This is Guanylate kinase from Pseudomonas syringae pv. tomato (strain ATCC BAA-871 / DC3000).